A 425-amino-acid chain; its full sequence is GTPase Obg (425 aa).

An Obg domain is found at Met1–Ile158. Residues Ala159–Lys330 form the OBG-type G domain. GTP contacts are provided by residues Gly165–Ser172, Phe190–Thr194, Asp212–Gly215, Asn282–Asp285, and Ser311–Ala313. Mg(2+) contacts are provided by Ser172 and Thr192. In terms of domain architecture, OCT spans Tyr344 to Asn425.

Belongs to the TRAFAC class OBG-HflX-like GTPase superfamily. OBG GTPase family. In terms of assembly, monomer. The cofactor is Mg(2+).

The protein resides in the cytoplasm. An essential GTPase which binds GTP, GDP and possibly (p)ppGpp with moderate affinity, with high nucleotide exchange rates and a fairly low GTP hydrolysis rate. Plays a role in control of the cell cycle, stress response, ribosome biogenesis and in those bacteria that undergo differentiation, in morphogenesis control. In Clostridioides difficile (strain 630) (Peptoclostridium difficile), this protein is GTPase Obg.